We begin with the raw amino-acid sequence, 139 residues long: MRSFEFFEHTADVGIRAYGKSLEEAFSNAALGVFEIITDTSKVKPIEYREIYLNGYDLENLLYKWIEELLYYYDSELMVFSKFDLMIDQDSMTLEGKAWGEKFNGKIHERRTVVKAMTYHQLSIEKTENCYVITFVVDI.

Aspartate 12, aspartate 138, and isoleucine 139 together coordinate Ca(2+).

This sequence belongs to the archease family.

Functionally, activates the tRNA-splicing ligase complex by facilitating the enzymatic turnover of catalytic subunit RtcB. Acts by promoting the guanylylation of RtcB, a key intermediate step in tRNA ligation. Can also alter the NTP specificity of RtcB such that ATP, dGTP or ITP is used efficiently. This Saccharolobus islandicus (strain Y.N.15.51 / Yellowstone #2) (Sulfolobus islandicus) protein is Protein archease.